The chain runs to 66 residues: MKTSVLFVIFGLALLFCLSFAAELEDTGRQCGEFMWKCGAGKPTCCSGYDCSPTWKWCVLKSPGRR.

Positions 1 to 21 (MKTSVLFVIFGLALLFCLSFA) are cleaved as a signal peptide. The propeptide occupies 22-29 (AELEDTGR). Disulfide bonds link Cys-31-Cys-46, Cys-38-Cys-51, and Cys-45-Cys-58.

The protein belongs to the neurotoxin 10 (Hwtx-1) family. 29 (Jztx-13) subfamily. Expressed by the venom gland.

Its subcellular location is the secreted. In terms of biological role, probable ion channel inhibitor. The polypeptide is U10-theraphotoxin-Cg1a 1 (Chilobrachys guangxiensis (Chinese earth tiger tarantula)).